We begin with the raw amino-acid sequence, 345 residues long: S-adenosylmethionine:tRNA ribosyltransferase-isomerase (345 aa).

The protein belongs to the QueA family. Monomer.

It is found in the cytoplasm. It carries out the reaction 7-aminomethyl-7-carbaguanosine(34) in tRNA + S-adenosyl-L-methionine = epoxyqueuosine(34) in tRNA + adenine + L-methionine + 2 H(+). It participates in tRNA modification; tRNA-queuosine biosynthesis. In terms of biological role, transfers and isomerizes the ribose moiety from AdoMet to the 7-aminomethyl group of 7-deazaguanine (preQ1-tRNA) to give epoxyqueuosine (oQ-tRNA). This chain is S-adenosylmethionine:tRNA ribosyltransferase-isomerase, found in Shewanella amazonensis (strain ATCC BAA-1098 / SB2B).